Reading from the N-terminus, the 342-residue chain is tRNA N6-adenosine threonylcarbamoyltransferase (342 aa).

Residues H115 and H119 each coordinate Fe cation. Substrate is bound by residues 137 to 141, D170, G183, D187, and N276; that span reads IVSGG. D304 contributes to the Fe cation binding site.

It belongs to the KAE1 / TsaD family. Fe(2+) is required as a cofactor.

It is found in the cytoplasm. The catalysed reaction is L-threonylcarbamoyladenylate + adenosine(37) in tRNA = N(6)-L-threonylcarbamoyladenosine(37) in tRNA + AMP + H(+). Its function is as follows. Required for the formation of a threonylcarbamoyl group on adenosine at position 37 (t(6)A37) in tRNAs that read codons beginning with adenine. Is involved in the transfer of the threonylcarbamoyl moiety of threonylcarbamoyl-AMP (TC-AMP) to the N6 group of A37, together with TsaE and TsaB. TsaD likely plays a direct catalytic role in this reaction. The chain is tRNA N6-adenosine threonylcarbamoyltransferase from Staphylococcus haemolyticus (strain JCSC1435).